Consider the following 412-residue polypeptide: tRNA (guanine-N(7)-)-methyltransferase non-catalytic subunit WDR4 (412 aa).

A2 carries the post-translational modification N-acetylalanine. WD repeat units lie at residues 3 to 40 (GSVGLALCGQTLVVRGGSRFLATSIASSDDDSLFIYDC), 50 to 90 (NKGE…LFRT), 94 to 131 (QCLSVRTVARRCTALTFIASEEKVLVADKSGDVYSFSV), 137 to 174 (CGRLELGHLSMLLDVAVSPDDRFILTADRDEKIRVSWA), 180 to 218 (IESFCLGHTEFVSRISVVPTQPGLLLSSSGDGTLRLWEY), 230 to 273 (ASLQ…IFQL), and 319 to 373 (PVGD…SYLK). The disordered stretch occupies residues 377 to 412 (ERLQQQLEKKQRRRSPPPGPDGHAKKMRPGEATLSC). S391 and S411 each carry phosphoserine.

This sequence belongs to the WD repeat TRM82 family. In terms of assembly, non-catalytic component of the METTL1-WDR4 complex, composed of METTL1 and WDR4. Interacts with FEN1; the interaction is direct.

It is found in the nucleus. Its subcellular location is the chromosome. It participates in tRNA modification; N(7)-methylguanine-tRNA biosynthesis. Functionally, non-catalytic component of the METTL1-WDR4 methyltransferase complex required for the formation of N(7)-methylguanine in a subset of RNA species, such as tRNAs, mRNAs and microRNAs (miRNAs). In the METTL1-WDR4 methyltransferase complex, WDR4 acts as a scaffold for tRNA-binding. Required for the formation of N(7)-methylguanine at position 46 (m7G46) in a large subset of tRNAs that contain the 5'-RAGGU-3' motif within the variable loop. M7G46 interacts with C13-G22 in the D-loop to stabilize tRNA tertiary structure and protect tRNAs from decay. Also required for the formation of N(7)-methylguanine at internal sites in a subset of mRNAs. Also required for methylation of a specific subset of miRNAs, such as let-7. Independently of METTL1, also plays a role in genome stability: localizes at the DNA replication site and regulates endonucleolytic activities of FEN1. This chain is tRNA (guanine-N(7)-)-methyltransferase non-catalytic subunit WDR4, found in Homo sapiens (Human).